A 155-amino-acid chain; its full sequence is Ribosome maturation factor RimP (155 aa).

This sequence belongs to the RimP family.

The protein resides in the cytoplasm. Functionally, required for maturation of 30S ribosomal subunits. In Parasynechococcus marenigrum (strain WH8102), this protein is Ribosome maturation factor RimP.